A 312-amino-acid chain; its full sequence is tRNA dimethylallyltransferase (312 aa).

Residue 11–18 participates in ATP binding; sequence GLTATGKT. 13-18 serves as a coordination point for substrate; that stretch reads TATGKT. Residues 36 to 39 form an interaction with substrate tRNA region; that stretch reads DSMC.

The protein belongs to the IPP transferase family. Monomer. It depends on Mg(2+) as a cofactor.

It catalyses the reaction adenosine(37) in tRNA + dimethylallyl diphosphate = N(6)-dimethylallyladenosine(37) in tRNA + diphosphate. Catalyzes the transfer of a dimethylallyl group onto the adenine at position 37 in tRNAs that read codons beginning with uridine, leading to the formation of N6-(dimethylallyl)adenosine (i(6)A). The protein is tRNA dimethylallyltransferase of Caldicellulosiruptor saccharolyticus (strain ATCC 43494 / DSM 8903 / Tp8T 6331).